Reading from the N-terminus, the 360-residue chain is MDKYNIEALIGEGTYGVVSRATVKATGQIVAIKKIRKILIQNQTDDGINFSAIREIKILQELKHDNVVNLLDIFAHKSNVYLVFELMQWDLQEVIEDKSIILKPADIKSYMKMLLQGIEACHRNWVLHRDLKPNNLLMSINGDLKLADFGLARQYGSPNKVFSPQAVTIFYRAPELLFGAKSYGPSVDIWSIGCIFAELMLRTPYLPGTGEIDQLRKICSALGTPNESNWPGVTCLPNYIKFTDHPATPFKQLFTAASDEAIDLISKMLLFNPSNRISAADALNHPYFTSGVKHTNPADLPVPFAKKASLLQQRQVLAQVQQQLLQKQQQQQQQQQQQIQSQPEPIQVDNVEQTQQAQQV.

The Protein kinase domain maps to Y4–F288. ATP-binding positions include I10–V18 and K33. D130 acts as the Proton acceptor in catalysis. Phosphoserine is present on residues S157 and S163. Over residues Q333–Q342 the composition is skewed to low complexity. Positions Q333 to V360 are disordered. The span at N350–V360 shows a compositional bias: polar residues.

The protein belongs to the protein kinase superfamily. CMGC Ser/Thr protein kinase family. CDC2/CDKX subfamily. In terms of assembly, probably associates with cyclin H and mat1 to form a multimeric active enzyme.

It localises to the nucleus. The enzyme catalyses L-seryl-[protein] + ATP = O-phospho-L-seryl-[protein] + ADP + H(+). The catalysed reaction is L-threonyl-[protein] + ATP = O-phospho-L-threonyl-[protein] + ADP + H(+). It carries out the reaction [DNA-directed RNA polymerase] + ATP = phospho-[DNA-directed RNA polymerase] + ADP + H(+). Catalytic part of CAK which activates cyclin-associated CDK1/CDK2/CDK4 by threonine phosphorylation, thereby allowing MPF activation. In Dictyostelium discoideum (Social amoeba), this protein is Cyclin-dependent kinase 7 (cdk7).